The chain runs to 465 residues: GTPase Der (465 aa).

EngA-type G domains follow at residues 3–166 and 184–358; these read FLVA…LNEY and IHFS…ACAN. GTP is bound by residues 9–16, 56–60, 118–121, 190–197, 237–241, and 302–305; these read GRANVGKS, DTGGI, NKVD, GRPNVGKS, DTAGV, and NKWD. A KH-like domain is found at 359–443; that stretch reads KKITTADATR…PIVFEFKQSE (85 aa). Positions 446 to 465 are disordered; the sequence is FADRKNKRSKDEGSKSKKVK.

Belongs to the TRAFAC class TrmE-Era-EngA-EngB-Septin-like GTPase superfamily. EngA (Der) GTPase family. Associates with the 50S ribosomal subunit.

GTPase that plays an essential role in the late steps of ribosome biogenesis. This chain is GTPase Der, found in Francisella tularensis subsp. holarctica (strain FTNF002-00 / FTA).